The following is a 461-amino-acid chain: MSKIHAVVLAAGQGTRMKSKLYKVLHPVCGKPMVQHVVDTMASMQVQDIVVVVGHGADAVRAKLGEDVTYALQEEQLGTAHAVSQAAPFLQDKEGTTFLLYGDVPLLSATTLSALLTYHEEQQAAATVLTAVLPDATGYGRIVRNEAGEVLRIVEHKDASEAERAIREINTGIYCYDNRKLWKALAEVKNDNAQGEYYVTDVVGILRDAGEKVVGYEAIDPEETLGVNDRVQLSEAEAYMKKRIMTGHMRNGVTIIDPTSTYIETDVKIEADTVIHPGSFLRGQTTVGADCVIGPQADLTNVEVASGVTISYSVMVDSRVESDSSVGPFAYVRPGSQIGSNAKIGDFVELKNAKIGDGTKVPHLSYVGDAEIGDGVNIGCGTITVNYDGAVKHKTTVKDGAFIGCNSNLVAPVTVGQNAYVAAGSTINQDVPDNALAIARERQVNKIDYANKMPRKGKKQS.

Residues 1–230 (MSKIHAVVLA…PEETLGVNDR (230 aa)) form a pyrophosphorylase region. UDP-N-acetyl-alpha-D-glucosamine is bound by residues 9-12 (LAAG), Lys23, Gln73, 78-79 (GT), 101-103 (YGD), Gly140, Glu155, Asn170, and Asn228. Asp103 lines the Mg(2+) pocket. Asn228 is a binding site for Mg(2+). Residues 231 to 251 (VQLSEAEAYMKKRIMTGHMRN) are linker. Positions 252-461 (GVTIIDPTST…KMPRKGKKQS (210 aa)) are N-acetyltransferase. Residues Arg333 and Lys351 each contribute to the UDP-N-acetyl-alpha-D-glucosamine site. His363 acts as the Proton acceptor in catalysis. The UDP-N-acetyl-alpha-D-glucosamine site is built by Tyr366 and Asn377. Acetyl-CoA is bound by residues 386-387 (NY), Ala423, and Arg440.

This sequence in the N-terminal section; belongs to the N-acetylglucosamine-1-phosphate uridyltransferase family. It in the C-terminal section; belongs to the transferase hexapeptide repeat family. In terms of assembly, homotrimer. The cofactor is Mg(2+).

The protein resides in the cytoplasm. It carries out the reaction alpha-D-glucosamine 1-phosphate + acetyl-CoA = N-acetyl-alpha-D-glucosamine 1-phosphate + CoA + H(+). The enzyme catalyses N-acetyl-alpha-D-glucosamine 1-phosphate + UTP + H(+) = UDP-N-acetyl-alpha-D-glucosamine + diphosphate. It functions in the pathway nucleotide-sugar biosynthesis; UDP-N-acetyl-alpha-D-glucosamine biosynthesis; N-acetyl-alpha-D-glucosamine 1-phosphate from alpha-D-glucosamine 6-phosphate (route II): step 2/2. Its pathway is nucleotide-sugar biosynthesis; UDP-N-acetyl-alpha-D-glucosamine biosynthesis; UDP-N-acetyl-alpha-D-glucosamine from N-acetyl-alpha-D-glucosamine 1-phosphate: step 1/1. The protein operates within bacterial outer membrane biogenesis; LPS lipid A biosynthesis. Functionally, catalyzes the last two sequential reactions in the de novo biosynthetic pathway for UDP-N-acetylglucosamine (UDP-GlcNAc). The C-terminal domain catalyzes the transfer of acetyl group from acetyl coenzyme A to glucosamine-1-phosphate (GlcN-1-P) to produce N-acetylglucosamine-1-phosphate (GlcNAc-1-P), which is converted into UDP-GlcNAc by the transfer of uridine 5-monophosphate (from uridine 5-triphosphate), a reaction catalyzed by the N-terminal domain. The chain is Bifunctional protein GlmU from Brevibacillus brevis (strain 47 / JCM 6285 / NBRC 100599).